We begin with the raw amino-acid sequence, 121 residues long: Large ribosomal subunit protein uL18 (121 aa).

Belongs to the universal ribosomal protein uL18 family. As to quaternary structure, part of the 50S ribosomal subunit; part of the 5S rRNA/L5/L18/L25 subcomplex. Contacts the 5S and 23S rRNAs.

This is one of the proteins that bind and probably mediate the attachment of the 5S RNA into the large ribosomal subunit, where it forms part of the central protuberance. In Burkholderia mallei (strain NCTC 10247), this protein is Large ribosomal subunit protein uL18.